The sequence spans 172 residues: Shikimate kinase (172 aa).

11 to 16 provides a ligand contact to ATP; the sequence is GCGKST. Residue Ser15 coordinates Mg(2+). Positions 33, 57, and 80 each coordinate substrate. Arg120 is an ATP binding site. Arg142 lines the substrate pocket. Arg158 provides a ligand contact to ATP.

Belongs to the shikimate kinase family. Monomer. The cofactor is Mg(2+).

It localises to the cytoplasm. The enzyme catalyses shikimate + ATP = 3-phosphoshikimate + ADP + H(+). The protein operates within metabolic intermediate biosynthesis; chorismate biosynthesis; chorismate from D-erythrose 4-phosphate and phosphoenolpyruvate: step 5/7. Functionally, catalyzes the specific phosphorylation of the 3-hydroxyl group of shikimic acid using ATP as a cosubstrate. The protein is Shikimate kinase of Flavobacterium johnsoniae (strain ATCC 17061 / DSM 2064 / JCM 8514 / BCRC 14874 / CCUG 350202 / NBRC 14942 / NCIMB 11054 / UW101) (Cytophaga johnsonae).